Reading from the N-terminus, the 749-residue chain is Cytosolic phospholipase A2 (749 aa).

Residues 1–178 (MSFIDPYQHI…MKKLLGPKKS (178 aa)) form a phospholipid binding region. A Phosphoserine modification is found at S2. In terms of domain architecture, C2 spans 6 to 122 (PYQHIIVEHQ…KVGEKKEVPF (117 aa)). Ca(2+) is bound by residues D40, T41, D43, N65, D93, A94, and N95. The PLA2c domain maps to 140 to 740 (SCPDLRFSMA…SNVEARRFFN (601 aa)). S228 (nucleophile) is an active-site residue. T268 is subject to Phosphothreonine. A disordered region spans residues 427–456 (KHIVSNDSSDSDDESQEPKGTENEDAERDY). A phosphoserine mark is found at S434, S435, and S437. S505 carries the phosphoserine; by MAPK modification. At S515 the chain carries Phosphoserine. K541 participates in a covalent cross-link: Glycyl lysine isopeptide (Lys-Gly) (interchain with G-Cter in SUMO2). The active-site Proton acceptor is D549. K606 participates in a covalent cross-link: Glycyl lysine isopeptide (Lys-Gly) (interchain with G-Cter in SUMO2). A phosphoserine mark is found at S727 and S729.

Interacts with KAT5. In terms of processing, phosphorylated at both Ser-505 and Ser-727 in response to mitogenic stimuli.

The protein localises to the cytoplasm. Its subcellular location is the golgi apparatus membrane. The protein resides in the nucleus envelope. The catalysed reaction is a 1,2-diacyl-sn-glycero-3-phosphocholine + H2O = a 1-acyl-sn-glycero-3-phosphocholine + a fatty acid + H(+). It catalyses the reaction a 1-O-alkyl-2-acyl-sn-glycero-3-phosphocholine + H2O = a 1-O-alkyl-sn-glycero-3-phosphocholine + a fatty acid + H(+). The enzyme catalyses a 1-acyl-sn-glycero-3-phosphocholine + H2O = sn-glycerol 3-phosphocholine + a fatty acid + H(+). It carries out the reaction 1-hexadecanoyl-2-(5Z,8Z,11Z,14Z-eicosatetraenoyl)-sn-glycero-3-phosphocholine + H2O = 1-hexadecanoyl-sn-glycero-3-phosphocholine + (5Z,8Z,11Z,14Z)-eicosatetraenoate + H(+). The catalysed reaction is 1,2-di-(5Z,8Z,11Z,14Z-eicosatetraenoyl)-sn-glycero-3-phosphocholine + H2O = 1-(5Z,8Z,11Z,14Z-eicosatetraenoyl)-sn-glycero-3-phosphocholine + (5Z,8Z,11Z,14Z)-eicosatetraenoate + H(+). It catalyses the reaction 1-octadecanoyl-2-(5Z,8Z,11Z,14Z-eicosatetraenoyl)-sn-glycero-3-phosphocholine + H2O = 1-octadecanoyl-sn-glycero-3-phosphocholine + (5Z,8Z,11Z,14Z)-eicosatetraenoate + H(+). The enzyme catalyses 1-hexadecanoyl-2-(9Z,12Z-octadecadienoyl)-sn-glycero-3-phosphocholine + H2O = (9Z,12Z)-octadecadienoate + 1-hexadecanoyl-sn-glycero-3-phosphocholine + H(+). It carries out the reaction 1-octadecanoyl-2-(9Z,12Z,15Z-octadecatrienoyl)-sn-glycero-3-phosphocholine + H2O = (9Z,12Z,15Z)-octadecatrienoate + 1-octadecanoyl-sn-glycero-3-phosphocholine + H(+). The catalysed reaction is 1-(5Z,8Z,11Z,14Z-eicosatetraenoyl)-2-hexadecanoyl-sn-glycero-3-phosphocholine + H2O = 1-(5Z,8Z,11Z,14Z-eicosatetraenoyl)-sn-glycero-3-phosphocholine + hexadecanoate + H(+). It catalyses the reaction 1-O-hexadecyl-2-(5Z,8Z,11Z,14Z)-eicosatetraenoyl-sn-glycero-3-phosphocholine + H2O = 1-O-hexadecyl-sn-glycero-3-phosphocholine + (5Z,8Z,11Z,14Z)-eicosatetraenoate + H(+). The enzyme catalyses 1,2-di-(9Z-octadecenoyl)-sn-glycero-3-phospho-(1'-sn-glycerol) + H2O = 1-(9Z-octadecenoyl)-sn-glycero-3-phospho-(1'-sn-glycerol) + (9Z)-octadecenoate + H(+). It carries out the reaction 1-octadecanoyl-2-(5Z,8Z,11Z,14Z-eicosatetraenoyl)-sn-glycero-3-phosphate + H2O = 1-octadecanoyl-sn-glycero-3-phosphate + (5Z,8Z,11Z,14Z)-eicosatetraenoate + H(+). The catalysed reaction is 1-hexadecanoyl-sn-glycero-3-phosphocholine + H2O = sn-glycerol 3-phosphocholine + hexadecanoate + H(+). It catalyses the reaction 2-(prostaglandin E2)-sn-glycero-3-phosphoethanolamine + H2O = sn-glycero-3-phosphoethanolamine + prostaglandin E2 + H(+). The enzyme catalyses 2-[(15S)-hydroxy-(5Z,8Z,11Z,13E)-eicosatetraenoyl]-sn-glycero-3-phosphocholine + H2O = (15S)-hydroxy-(5Z,8Z,11Z,13E)-eicosatetraenoate + sn-glycerol 3-phosphocholine + H(+). It carries out the reaction 2-[(15R)-hydroxy-(5Z,8Z,11Z,13E)-eicosatetraenoyl]-sn-glycero-3-phosphocholine + H2O = (15R)-hydroxy-(5Z,8Z,11Z,13E)-eicosatetraenoate + sn-glycerol 3-phosphocholine + H(+). The catalysed reaction is 2-(prostaglandin E2)-sn-glycero-3-phosphocholine + H2O = prostaglandin E2 + sn-glycerol 3-phosphocholine + H(+). It catalyses the reaction 2-[(11R)-hydroxy-(5Z,8Z,12E,14Z)-eicosatetraenoyl]-sn-glycero-3-phosphocholine + H2O = (11R)-hydroxy-(5Z,8Z,12E,14Z)-eicosatetraenoate + sn-glycerol 3-phosphocholine + H(+). The enzyme catalyses 1-(5Z,8Z,11Z,14Z-eicosatetraenoyl)-2-O-hexadecyl-sn-glycero-3-phosphocholine + H2O = 2-O-hexadecyl-sn-glycero-3-phosphocholine + (5Z,8Z,11Z,14Z)-eicosatetraenoate + H(+). It carries out the reaction 1-octadecanoyl-2-(5Z,8Z,11Z,14Z-eicosatetraenoyl)-sn-glycero-3-phosphocholine + glycerol = 1-(5Z,8Z,11Z,14Z-eicosatetraenoyl)-glycerol + 1-octadecanoyl-sn-glycero-3-phosphocholine. The catalysed reaction is 1-octadecanoyl-2-(9Z,12Z,15Z-octadecatrienoyl)-sn-glycero-3-phosphocholine + glycerol = 1-(9Z,12Z,15Z-octadecatrienoyl)-glycerol + 1-octadecanoyl-sn-glycero-3-phosphocholine. The protein operates within membrane lipid metabolism; glycerophospholipid metabolism. It participates in lipid metabolism; arachidonate metabolism. Its pathway is lipid metabolism; prostaglandin biosynthesis. It functions in the pathway lipid metabolism; leukotriene B4 biosynthesis. Activated by cytosolic calcium, which is necessary for binding to membrane lipids. Activated by phosphorylation in response to mitogenic stimuli. Functionally, has primarily calcium-dependent phospholipase and lysophospholipase activities, with a major role in membrane lipid remodeling and biosynthesis of lipid mediators of the inflammatory response. Plays an important role in embryo implantation and parturition through its ability to trigger prostanoid production. Preferentially hydrolyzes the ester bond of the fatty acyl group attached at sn-2 position of phospholipids (phospholipase A2 activity). Selectively hydrolyzes sn-2 arachidonoyl group from membrane phospholipids, providing the precursor for eicosanoid biosynthesis via the cyclooxygenase pathway. In an alternative pathway of eicosanoid biosynthesis, hydrolyzes sn-2 fatty acyl chain of eicosanoid lysophopholipids to release free bioactive eicosanoids. Hydrolyzes the ester bond of the fatty acyl group attached at sn-1 position of phospholipids (phospholipase A1 activity) only if an ether linkage rather than an ester linkage is present at the sn-2 position. This hydrolysis is not stereospecific. Has calcium-independent phospholipase A2 and lysophospholipase activities in the presence of phosphoinositides. Has O-acyltransferase activity. Catalyzes the transfer of fatty acyl chains from phospholipids to a primary hydroxyl group of glycerol (sn-1 or sn-3), potentially contributing to monoacylglycerol synthesis. This chain is Cytosolic phospholipase A2 (PLA2G4A), found in Equus caballus (Horse).